A 388-amino-acid chain; its full sequence is MKYLTSGESHGPQLTVIIEGVPANLEIKAEDINKEMFKRQGGYGRGRRMQIEKDAVEIVSGVRNGYTLGSPITIVVTNDDFTHWRNIMGIEPISDEERDNMKRTITKPRPGHADLIGGMKYNHRDLRNVLERSSARETAARVAVGAVSKILLEQLDIHMYSRVVEIGGIKDEGLYDTETFKQNIDKNDVRVIDETIAQKMRDKIDAAKKDGDSIGGVVQVMVENMPVAVGSYVQYDRKLDGRIAQGVVSINAFKGVSFGEGFKAAEKPGSEIQDEILYDNEIGFYRGSNHLGGFEGGMTNGMPIIVNGVMKPIPTLYKPLNSVDINTKEDFKATIERSDSCAVPAASVVCEHVVAFEVAKAITEEFQSNHIDQLKAQIDERRRLNIEF.

Residues Arg-39 and Arg-45 each coordinate NADP(+). Residues Arg-132–Ser-134, Asn-251–Ala-252, Gly-296, Lys-311–Thr-315, and Arg-337 contribute to the FMN site.

The protein belongs to the chorismate synthase family. As to quaternary structure, homotetramer. It depends on FMNH2 as a cofactor.

It catalyses the reaction 5-O-(1-carboxyvinyl)-3-phosphoshikimate = chorismate + phosphate. It functions in the pathway metabolic intermediate biosynthesis; chorismate biosynthesis; chorismate from D-erythrose 4-phosphate and phosphoenolpyruvate: step 7/7. In terms of biological role, catalyzes the anti-1,4-elimination of the C-3 phosphate and the C-6 proR hydrogen from 5-enolpyruvylshikimate-3-phosphate (EPSP) to yield chorismate, which is the branch point compound that serves as the starting substrate for the three terminal pathways of aromatic amino acid biosynthesis. This reaction introduces a second double bond into the aromatic ring system. The protein is Chorismate synthase of Staphylococcus haemolyticus (strain JCSC1435).